Reading from the N-terminus, the 922-residue chain is DNA gyrase subunit A (922 aa).

A Topo IIA-type catalytic domain is found at 34 to 534 (LPDVRDGLKP…SSAEINIEDL (501 aa)). Catalysis depends on tyrosine 122, which acts as the O-(5'-phospho-DNA)-tyrosine intermediate. The GyrA-box signature appears at 561–567 (QRRGGRG). Disordered stretches follow at residues 715–763 (MQPM…VRPM) and 899–922 (IDGE…DPEE). The segment covering 723–743 (DDVDGDDESVIDAGNDDDGSD) has biased composition (acidic residues).

It belongs to the type II topoisomerase GyrA/ParC subunit family. As to quaternary structure, heterotetramer, composed of two GyrA and two GyrB chains. In the heterotetramer, GyrA contains the active site tyrosine that forms a transient covalent intermediate with DNA, while GyrB binds cofactors and catalyzes ATP hydrolysis.

Its subcellular location is the cytoplasm. The catalysed reaction is ATP-dependent breakage, passage and rejoining of double-stranded DNA.. Functionally, a type II topoisomerase that negatively supercoils closed circular double-stranded (ds) DNA in an ATP-dependent manner to modulate DNA topology and maintain chromosomes in an underwound state. Negative supercoiling favors strand separation, and DNA replication, transcription, recombination and repair, all of which involve strand separation. Also able to catalyze the interconversion of other topological isomers of dsDNA rings, including catenanes and knotted rings. Type II topoisomerases break and join 2 DNA strands simultaneously in an ATP-dependent manner. This Aeromonas salmonicida protein is DNA gyrase subunit A.